Consider the following 285-residue polypeptide: Extracellular metalloprotease NCU07200 (285 aa).

Residues 1–18 form the signal peptide; sequence MQIKSFLLAAAAAPAALG. Histidine 197 contacts Zn(2+). Glutamate 198 is an active-site residue. Histidine 201 lines the Zn(2+) pocket. Residues cysteine 233 and cysteine 260 are joined by a disulfide bond. N-linked (GlcNAc...) asparagine glycosylation occurs at asparagine 282.

It belongs to the peptidase M43B family.

The protein resides in the secreted. Secreted metalloproteinase that allows assimilation of proteinaceous substrates. This chain is Extracellular metalloprotease NCU07200, found in Neurospora crassa (strain ATCC 24698 / 74-OR23-1A / CBS 708.71 / DSM 1257 / FGSC 987).